We begin with the raw amino-acid sequence, 91 residues long: Probable Fe(2+)-trafficking protein (91 aa).

This sequence belongs to the Fe(2+)-trafficking protein family.

Could be a mediator in iron transactions between iron acquisition and iron-requiring processes, such as synthesis and/or repair of Fe-S clusters in biosynthetic enzymes. The sequence is that of Probable Fe(2+)-trafficking protein from Cellvibrio japonicus (strain Ueda107) (Pseudomonas fluorescens subsp. cellulosa).